Consider the following 189-residue polypeptide: Elongation factor P (189 aa).

It belongs to the elongation factor P family.

The protein localises to the cytoplasm. The protein operates within protein biosynthesis; polypeptide chain elongation. Involved in peptide bond synthesis. Stimulates efficient translation and peptide-bond synthesis on native or reconstituted 70S ribosomes in vitro. Probably functions indirectly by altering the affinity of the ribosome for aminoacyl-tRNA, thus increasing their reactivity as acceptors for peptidyl transferase. The sequence is that of Elongation factor P from Pseudomonas fluorescens (strain Pf0-1).